A 69-amino-acid polypeptide reads, in one-letter code: Antimicrobial peptide Eval36 (69 aa).

The N-terminal stretch at 1–23 (MKAQFAILVISMMLLQLIVQTES) is a signal peptide. Residue Leu-37 is modified to Leucine amide. The propeptide occupies 38-69 (GKRGLRNLDDFQDFLDSDTSDADLRMLRDMFR).

Belongs to the non-disulfide-bridged peptide (NDBP) superfamily. Short antimicrobial peptide (group 4) family. In terms of tissue distribution, expressed by the venom gland.

The protein resides in the secreted. In terms of biological role, probable antimicrobial peptide. Shows low inhibitory activity against herpes simplex virus type 1 (HSV-1). The chain is Antimicrobial peptide Eval36 from Euscorpiops validus (Scorpion).